The chain runs to 564 residues: Proline--tRNA ligase (564 aa).

Belongs to the class-II aminoacyl-tRNA synthetase family. ProS type 1 subfamily. Homodimer.

The protein resides in the cytoplasm. It carries out the reaction tRNA(Pro) + L-proline + ATP = L-prolyl-tRNA(Pro) + AMP + diphosphate. Its function is as follows. Catalyzes the attachment of proline to tRNA(Pro) in a two-step reaction: proline is first activated by ATP to form Pro-AMP and then transferred to the acceptor end of tRNA(Pro). As ProRS can inadvertently accommodate and process non-cognate amino acids such as alanine and cysteine, to avoid such errors it has two additional distinct editing activities against alanine. One activity is designated as 'pretransfer' editing and involves the tRNA(Pro)-independent hydrolysis of activated Ala-AMP. The other activity is designated 'posttransfer' editing and involves deacylation of mischarged Ala-tRNA(Pro). The misacylated Cys-tRNA(Pro) is not edited by ProRS. The polypeptide is Proline--tRNA ligase (Xylella fastidiosa (strain M12)).